Reading from the N-terminus, the 355-residue chain is Probable low-specificity L-threonine aldolase 2 (355 aa).

Lys211 bears the N6-(pyridoxal phosphate)lysine mark.

It belongs to the threonine aldolase family. The cofactor is pyridoxal 5'-phosphate. In terms of tissue distribution, expressed in roots, leaf vasculature and flowers.

The catalysed reaction is L-threonine = acetaldehyde + glycine. It catalyses the reaction L-allo-threonine = acetaldehyde + glycine. It participates in amino-acid degradation; L-threonine degradation via aldolase pathway; acetaldehyde and glycine from L-threonine: step 1/1. In terms of biological role, threonine aldolase involved in threonine degradation to glycine. May play a role in the removal of L-allo-threonine. The protein is Probable low-specificity L-threonine aldolase 2 (THA2) of Arabidopsis thaliana (Mouse-ear cress).